Here is a 541-residue protein sequence, read N- to C-terminus: MVADPPRDSKGLAAAEPTANGGLALASIEDQGAAAGGYCGSRDQVRRCLRANLLVLLTVVAVVAGVALGLGVSGAGGALALGPERLSAFVFPGELLLRLLRMIILPLVVCSLIGGAASLDPGALGRLGAWALLFFLVTTLLASALGVGLALALQPGAASAAINASVGAAGSAENAPSKEVLDSFLDLARNIFPSNLVSAAFRSYSTTYEERNITGTRVKVPVGQEVEGMNILGLVVFAIVFGVALRKLGPEGELLIRFFNSFNEATMVLVSWIMWYAPVGIMFLVAGKIVEMEDVGLLFARLGKYILCCLLGHAIHGLLVLPLIYFLFTRKNPYRFLWGIVTPLATAFGTSSSSATLPLMMKCVEENNGVAKHISRFILPIGATVNMDGAALFQCVAAVFIAQLSQQSLDFVKIITILVTATASSVGAAGIPAGGVLTLAIILEAVNLPVDHISLILAVDWLVDRSCTVLNVEGDALGAGLLQNYVDRTESRSTEPELIQVKSELPLDPLPVPTEEGNPLLKHYRGPAGDATVASEKESVM.

Residue methionine 1 is modified to N-acetylmethionine. Over 1-51 (MVADPPRDSKGLAAAEPTANGGLALASIEDQGAAAGGYCGSRDQVRRCLRA) the chain is Cytoplasmic. Residues 52-81 (NLLVLLTVVAVVAGVALGLGVSGAGGALAL) form a helical membrane-spanning segment. Residues 82–94 (GPERLSAFVFPGE) are Extracellular-facing. The helical transmembrane segment at 95–116 (LLLRLLRMIILPLVVCSLIGGA) threads the bilayer. Residues 117 to 130 (ASLDPGALGRLGAW) are Cytoplasmic-facing. A helical transmembrane segment spans residues 131-153 (ALLFFLVTTLLASALGVGLALAL). Residues 154 to 224 (QPGAASAAIN…GTRVKVPVGQ (71 aa)) are Extracellular-facing. Residues asparagine 163 and asparagine 212 are each glycosylated (N-linked (GlcNAc...) asparagine). Residues 225 to 248 (EVEGMNILGLVVFAIVFGVALRKL) form a helical membrane-spanning segment. Residues 249–257 (GPEGELLIR) are Cytoplasmic-facing. Residues 258–285 (FFNSFNEATMVLVSWIMWYAPVGIMFLV) form a helical membrane-spanning segment. Topologically, residues 286–306 (AGKIVEMEDVGLLFARLGKYI) are extracellular. Residues 307-328 (LCCLLGHAIHGLLVLPLIYFLF) form a helical membrane-spanning segment. The Cytoplasmic portion of the chain corresponds to 329-333 (TRKNP). The segment at residues 334–364 (YRFLWGIVTPLATAFGTSSSSATLPLMMKCV) is an intramembrane region (discontinuously helical). Topologically, residues 365–373 (EENNGVAKH) are cytoplasmic. A helical membrane pass occupies residues 374–400 (ISRFILPIGATVNMDGAALFQCVAAVF). Na(+) contacts are provided by glycine 382, threonine 384, and asparagine 386. Residues 401 to 413 (IAQLSQQSLDFVK) lie on the Extracellular side of the membrane. The segment at residues 414 to 447 (IITILVTATASSVGAAGIPAGGVLTLAIILEAVN) is an intramembrane region (discontinuously helical). Residues 448–460 (LPVDHISLILAVD) lie on the Extracellular side of the membrane. The chain crosses the membrane as a helical span at residues 461-482 (WLVDRSCTVLNVEGDALGAGLL). Na(+) contacts are provided by asparagine 471 and aspartate 475. At 483–541 (QNYVDRTESRSTEPELIQVKSELPLDPLPVPTEEGNPLLKHYRGPAGDATVASEKESVM) the chain is on the cytoplasmic side. Residue serine 493 is modified to Phosphoserine. Phosphothreonine is present on threonine 494. A phosphoserine mark is found at serine 503, serine 535, and serine 539. The tract at residues 511 to 541 (PVPTEEGNPLLKHYRGPAGDATVASEKESVM) is disordered.

The protein belongs to the dicarboxylate/amino acid:cation symporter (DAACS) (TC 2.A.23) family. SLC1A5 subfamily. As to quaternary structure, homotrimer. Interacts with ERVH48-1/suppressyn; may negatively regulate syncytialization. As to expression, placenta, lung, skeletal muscle, kidney, pancreas, and intestine. Expressed in CD34-positive hematopoietic progenitors (at protein level).

The protein resides in the cell membrane. It localises to the melanosome. It carries out the reaction L-glutamine(out) + L-serine(in) + Na(+)(out) = L-glutamine(in) + L-serine(out) + Na(+)(in). The enzyme catalyses L-glutamine(in) + L-serine(out) + Na(+)(out) = L-glutamine(out) + L-serine(in) + Na(+)(in). The catalysed reaction is L-threonine(in) + L-glutamine(out) + Na(+)(out) = L-threonine(out) + L-glutamine(in) + Na(+)(in). It catalyses the reaction L-threonine(out) + L-glutamine(in) + Na(+)(out) = L-threonine(in) + L-glutamine(out) + Na(+)(in). It carries out the reaction L-asparagine(in) + L-glutamine(out) + Na(+)(out) = L-asparagine(out) + L-glutamine(in) + Na(+)(in). The enzyme catalyses L-asparagine(out) + L-glutamine(in) + Na(+)(out) = L-asparagine(in) + L-glutamine(out) + Na(+)(in). The catalysed reaction is L-glutamine(in) + L-alanine(out) + Na(+)(out) = L-glutamine(out) + L-alanine(in) + Na(+)(in). It catalyses the reaction L-valine(out) + L-glutamine(in) + Na(+)(out) = L-valine(in) + L-glutamine(out) + Na(+)(in). It carries out the reaction L-glutamine(in) + L-methionine(out) + Na(+)(out) = L-glutamine(out) + L-methionine(in) + Na(+)(in). The enzyme catalyses L-glutamine(in) + L-glutamate(out) + Na(+)(out) + H(+)(out) = L-glutamine(out) + L-glutamate(in) + Na(+)(in) + H(+)(in). The catalysed reaction is D-serine(in) + L-glutamine(out) + Na(+)(out) = D-serine(out) + L-glutamine(in) + Na(+)(in). It catalyses the reaction D-serine(in) + L-alanine(out) + Na(+)(out) = D-serine(out) + L-alanine(in) + Na(+)(in). It carries out the reaction nitrate(in) = nitrate(out). The enzyme catalyses iodide(out) = iodide(in). The catalysed reaction is thiocyanate(in) = thiocyanate(out). Regulated by L-cysteine, which can either inhibit substrate influx or trigger substrate efflux without being transported itself. In terms of biological role, sodium-coupled antiporter of neutral amino acids. In a tri-substrate transport cycle, exchanges neutral amino acids between the extracellular and intracellular compartments, coupled to the inward cotransport of at least one sodium ion. The preferred substrate is the essential amino acid L-glutamine, a precursor for biosynthesis of proteins, nucleotides and amine sugars as well as an alternative fuel for mitochondrial oxidative phosphorylation. Exchanges L-glutamine with other neutral amino acids such as L-serine, L-threonine and L-asparagine in a bidirectional way. Provides L-glutamine to proliferating stem and activated cells driving the metabolic switch toward cell differentiation. The transport cycle is usually pH-independent, with the exception of L-glutamate. Transports extracellular L-glutamate coupled to the cotransport of one proton and one sodium ion in exchange for intracellular L-glutamine counter-ion. May provide for L-glutamate uptake in glial cells regulating glutamine/glutamate cycle in the nervous system. Can transport D-amino acids. Mediates D-serine release from the retinal glia potentially affecting NMDA receptor function in retinal neurons. Displays sodium- and amino acid-dependent but uncoupled channel-like anion conductance with a preference SCN(-) &gt;&gt; NO3(-) &gt; I(-) &gt; Cl(-). Through binding of the fusogenic protein syncytin-1/ERVW-1 may mediate trophoblasts syncytialization, the spontaneous fusion of their plasma membranes, an essential process in placental development. (Microbial infection) Acts as a cell surface receptor for Feline endogenous virus RD114. Its function is as follows. (Microbial infection) Acts as a cell surface receptor for Baboon M7 endogenous virus. Functionally, (Microbial infection) Acts as a cell surface receptor for type D simian retroviruses. This chain is Neutral amino acid transporter B(0), found in Homo sapiens (Human).